A 207-amino-acid polypeptide reads, in one-letter code: Protein lin-7 homolog B (207 aa).

A Kinase interacting site motif is present at residues 1 to 13 (MAALVEPLGLERD). The region spanning 10 to 65 (LERDVSRAVELLERLQRSGELPPQKLQALQRVLQSRFCSAIREVYEQLYDTLDITG) is the L27 domain. The region spanning 93-175 (VVELPKTDEG…SVKLVVRYTP (83 aa)) is the PDZ domain. The tract at residues 187–207 (KMRSARRRQQHHSYSSLESRG) is disordered. The span at 198 to 207 (HSYSSLESRG) shows a compositional bias: polar residues.

This sequence belongs to the lin-7 family. As to quaternary structure, forms two exclusive ternary complexes with CASK and CASKIN1. The brain-specific heterotrimeric complex (LIN-10-LIN-2-LIN-7 complex) composed of at least APBA1, CASK, and LIN7, associates with the motor protein KIF17 to transport vesicles along microtubules. Forms a heterotrimeric complex composed of MMP5, LIN7B and PATJ; the N-terminal L27 domain of PALS1 interacts with the L27 domain of PATJ and the C-terminal L27 domain of PALS1 interacts with the L27 domain of LIN7B. Forms a heterotrimeric complex with DLG1 and CASK via their L27 domains. Interacts with DLG4 and GRIN2B as well as CDH1 and CTNNB1, the channels KCNJ12/Kir2.2, KCNJ4/Kir2.3 and probably KCNJ2/Kir2.1 and SLC6A12/BGT-1 via its PDZ domain. The association of LIN7A with cadherin and beta-catenin is calcium-dependent, occurs at synaptic junctions and requires the actin cytoskeleton. Interacts with EGFR, ERBB2, ERBB3 and ERBB4 with both PDZ and KID domains. Associates with KIF17 via APBA1. Interacts with ASIC3. Interacts with TOPK. Interacts with RTKN. Interacts with APBA1. Interacts with MPP7. Interacts with DLG2. Interacts with DLG3. In terms of tissue distribution, expressed only in brain.

The protein resides in the cell membrane. The protein localises to the basolateral cell membrane. Its subcellular location is the cell junction. It is found in the postsynaptic density membrane. It localises to the tight junction. Its function is as follows. Plays a role in establishing and maintaining the asymmetric distribution of channels and receptors at the plasma membrane of polarized cells. Forms membrane-associated multiprotein complexes that may regulate delivery and recycling of proteins to the correct membrane domains. The tripartite complex composed of LIN7 (LIN7A, LIN7B or LIN7C), CASK and APBA1 associates with the motor protein KIF17 to transport vesicles containing N-methyl-D-aspartate (NMDA) receptor subunit NR2B along microtubules. This complex may have the potential to couple synaptic vesicle exocytosis to cell adhesion in brain. Ensures the proper localization of GRIN2B (subunit 2B of the NMDA receptor) to neuronal postsynaptic density and may function in localizing synaptic vesicles at synapses where it is recruited by beta-catenin and cadherin. Required to localize Kir2 channels, GABA transporter (SLC6A12) and EGFR/ERBB1, ERBB2, ERBB3 and ERBB4 to the basolateral membrane of epithelial cells. May increase the amplitude of ASIC3 acid-evoked currents by stabilizing the channel at the cell surface. The protein is Protein lin-7 homolog B (Lin7b) of Rattus norvegicus (Rat).